The primary structure comprises 151 residues: Small ribosomal subunit protein uS15 (151 aa).

This sequence belongs to the universal ribosomal protein uS15 family.

The sequence is that of Small ribosomal subunit protein uS15 (RPS13) from Agaricus bisporus (White button mushroom).